Reading from the N-terminus, the 277-residue chain is Soluble NSF attachment protein 29 (277 aa).

Basic and acidic residues predominate over residues 1-11; that stretch reads MSRNPFDDDYR. Disordered stretches follow at residues 1 to 30, 49 to 73, and 117 to 170; these read MSRN…MGHY, ESLD…STAQ, and KFTK…ESSR. Residues 14-28 are compositionally biased toward polar residues; the sequence is AASSTMPVKSYTTMG. Residues 44–106 form the t-SNARE coiled-coil homology 1 domain; the sequence is EKTLQESLDS…QMTQRNLNSL (63 aa). Residues 49–65 are compositionally biased toward basic and acidic residues; the sequence is ESLDSTERSRRHLENSE. Residues 134-170 are compositionally biased toward polar residues; it reads SKSASRLSETATNLSSGGGSATFSGPSGQRTLTESSR. One can recognise a t-SNARE coiled-coil homology 2 domain in the interval 179-241; sequence EAMDNQIDEN…RDQDKQMQKI (63 aa).

It belongs to the SNAP-25 family.

The protein resides in the synapse. It localises to the synaptosome. SNAREs, soluble N-ethylmaleimide-sensitive factor-attachment protein receptors, are essential proteins for fusion of cellular membranes. SNAREs localized on opposing membranes assemble to form a trans-SNARE complex, an extended, parallel four alpha-helical bundle that drives membrane fusion. Plays a role in the processing and secretion of the aspartic protease hrg-7 from the intestine. The sequence is that of Soluble NSF attachment protein 29 from Caenorhabditis elegans.